Consider the following 485-residue polypeptide: Predicted GPI-anchored protein 27 (485 aa).

The first 20 residues, 1–20 (MHFTSSLLATLIWFTLPVQS), serve as a signal peptide directing secretion. N-linked (GlcNAc...) asparagine glycans are attached at residues Asn-30, Asn-86, Asn-96, and Asn-444. Gly-467 is lipidated: GPI-anchor amidated glycine. Residues 468–485 (LVLVSSGVLLGTCLLFIL) constitute a propeptide, removed in mature form.

It localises to the cell membrane. The sequence is that of Predicted GPI-anchored protein 27 (PGA27) from Candida albicans (strain SC5314 / ATCC MYA-2876) (Yeast).